The chain runs to 295 residues: Protease HtpX (295 aa).

Helical transmembrane passes span 4–24 (ILLF…TLSL) and 41–61 (GQLL…SLFI). Zn(2+) is bound at residue histidine 147. Glutamate 148 is an active-site residue. Histidine 151 lines the Zn(2+) pocket. The next 2 helical transmembrane spans lie at 158–178 (VTMA…ARII) and 198–218 (FVAT…IVMW). Glutamate 224 is a Zn(2+) binding site.

Belongs to the peptidase M48B family. It depends on Zn(2+) as a cofactor.

Its subcellular location is the cell inner membrane. This is Protease HtpX from Pseudomonas entomophila (strain L48).